The following is a 483-amino-acid chain: BTB/POZ domain and ankyrin repeat-containing protein COCH (483 aa).

Residues 25–105 form the BTB domain; the sequence is SDVVFSVEGR…LYSGQVSIVP (81 aa). The segment at 111 to 125 adopts a C2HC NPR-type zinc-finger fold; that stretch reads RPNCGDRGCWHTHCT. Residues cysteine 114, cysteine 119, histidine 121, and cysteine 124 each contribute to the Zn(2+) site. 4 ANK repeats span residues 249–278, 279–308, 313–342, and 346–380; these read QKIRRMRRALDSSDVELVKLMVMGEGLNLD, EALALPYAVESCSREVVKALLELGAADVNF, TGKTPLHIAAEMVSPDMVAVLLDHHADPNV, and DGVTPLDILRTLTSDFLFKGAVPGLTHIEPNKLRL. Disordered stretches follow at residues 395 to 435 and 450 to 483; these read EEGN…NSNM and MSTSRLDSGDDDHNSNQREAMNPSMYHHHHSHDY. Over residues 398 to 414 the composition is skewed to low complexity; sequence NNNNNANNNNTGSSATN. Positions 456–465 are enriched in basic and acidic residues; sequence DSGDDDHNSN.

Belongs to the plant 'ANKYRIN-BTB/POZ' family. 'NOOT-BOP-COCH-like' (NBCL) subfamily. Homodimer.

It localises to the nucleus. The protein resides in the cytoplasm. The protein localises to the cell membrane. The protein operates within protein modification; protein ubiquitination. May act as a substrate-specific adapter of an E3 ubiquitin-protein ligase complex (CUL3-RBX1-BTB) which mediates the ubiquitination and subsequent proteasomal degradation of target proteins. Transcriptional co-regulator involved in the promotion of leaf and floral meristem fate and determinacy. Promotes normal stipule growth and development. Required for the abscission of senescent organs, probably by regulating the cell wall disorganization in abscission zones (AZs, e.g. pulvini at the base of leaves). Down-regulates UNI expression in primordia of leaves and secondary inflorescences, and thereby controls their sizes and/or structures. Involved in the coordination of the symbiotic nodule developmental program. Promotes the formation of root nodules by interacting directly with APP1 to modulate the expression of the nuclear transcription factor Y subunit (NF-YA1), a key nodulin. Necessary for the robust maintenance of nodule identity throughout the nodule developmental program. This chain is BTB/POZ domain and ankyrin repeat-containing protein COCH, found in Pisum sativum (Garden pea).